Consider the following 553-residue polypeptide: Arylsulfatase K (553 aa).

The signal sequence occupies residues 1-16 (MLLLLVSVVAALALAA). Positions 40 and 80 each coordinate Ca(2+). The Nucleophile role is filled by Cys80. Cys80 carries the 3-oxoalanine (Cys) modification. N-linked (GlcNAc...) asparagine glycosylation is present at Asn108. Lys128 lines the substrate pocket. Asn191 carries an N-linked (GlcNAc...) asparagine glycan. Residue His249 coordinates substrate. Asn260 carries N-linked (GlcNAc...) asparagine glycosylation. Ca(2+) is bound by residues Asp311 and His312. Residues Asn373, Asn411, and Asn496 are each glycosylated (N-linked (GlcNAc...) asparagine). A disordered region spans residues 530–553 (SPLASSPTQSTSGSQPTLPQSTSG). Over residues 534 to 553 (SSPTQSTSGSQPTLPQSTSG) the composition is skewed to low complexity.

The protein belongs to the sulfatase family. Ca(2+) is required as a cofactor. The conversion to 3-oxoalanine (also known as C-formylglycine, FGly), of a serine or cysteine residue in prokaryotes and of a cysteine residue in eukaryotes, is critical for catalytic activity. Post-translationally, the 75-kDa precursor undergoes proteolytic processing to yield a 23 kDa form. In terms of processing, N-glycosylated with both high mannose and complex type sugars.

The protein resides in the secreted. It is found in the lysosome. It catalyses the reaction an aryl sulfate + H2O = a phenol + sulfate + H(+). It carries out the reaction Hydrolysis of the 2-sulfate groups of the 2-O-sulfo-D-glucuronate residues of chondroitin sulfate, heparin and heparitin sulfate.. Functionally, catalyzes the hydrolysis of pseudosubstrates such as p-nitrocatechol sulfate and p-nitrophenyl sulfate. Catalyzes the hydrolysis of the 2-sulfate groups of the 2-O-sulfo-D-glucuronate residues of chondroitin sulfate, heparin and heparitin sulfate. Acts selectively on 2-sulfoglucuronate and lacks activity against 2-sulfoiduronate. In Mus musculus (Mouse), this protein is Arylsulfatase K (Arsk).